The primary structure comprises 757 residues: MTENSAVEVDEGVFESTAVIDNGSFGTRTIRFETGRLAQQAAGAVVAYLDDETMLLSATSASKHPKEHFDFFPLTVDVEERMYAAGRIPGSFFRREGRPSTDAILTCRLIDRPLRPSFVDGLRNEIQVVVTVMSLNPQDLYDVVAINAASASTQIAGLPFSGPVGGVRVALITSDENKAGQWVAFPTVEQLENAVFDMVVAGRIVSGSGDDADVAIMMVEAEATDNVISLIDGGAQAPTEAIVAEGLEAAKPFIARLCTAQQQLAAKASKPTGDFPVFPAYQDDVFAAVEAAAAEKLSAALTIAGKQERDDKTDEVKVEVLEQVAPNFEGREKELGAAFRSLTKKLVRQRILRDQFRIDGRGITDIRSLSAEVAIVPRAHGSALFERGETQILGVTTLDMVKMAQQVDSLGPETTKRYMHHYNFPPYSTGETGRVGSPKRREIGHGALAERALMPVLPSVEEFPYAIRQVSEALSSNGSTSMGSVCASTLALLNAGVPLKAPVAGIAMGLVSDQVDGETRYVALTDILGAEDAFGDMDFKVAGTKDFVTALQLDTKLDGIPSKVLAGALSQAKDARATILEVMAEAIDTPDEMSPFAPRVTAIKVPVDKIGEVIGPKGKMINSITEQTGANISIEDDGTVFVGATDGPSAQAAIDMINAIANPQLPKVGERFLGTVVKTTAFGAFVSLLPGRDGLVHISKLGSGKRIAKVEDVVSVGSKLRVEIADIDNRGKISLIPVEEDGAAAPAEQSEEAAAEK.

Residues D532 and D538 each contribute to the Mg(2+) site. One can recognise a KH domain in the interval 598-657; sequence PRVTAIKVPVDKIGEVIGPKGKMINSITEQTGANISIEDDGTVFVGATDGPSAQAAIDMI. Residues 669 to 738 enclose the S1 motif domain; the sequence is GERFLGTVVK…NRGKISLIPV (70 aa).

The protein belongs to the polyribonucleotide nucleotidyltransferase family. Mg(2+) is required as a cofactor.

The protein localises to the cytoplasm. It catalyses the reaction RNA(n+1) + phosphate = RNA(n) + a ribonucleoside 5'-diphosphate. Involved in mRNA degradation. Catalyzes the phosphorolysis of single-stranded polyribonucleotides processively in the 3'- to 5'-direction. This chain is Polyribonucleotide nucleotidyltransferase, found in Rhodococcus jostii (strain RHA1).